Reading from the N-terminus, the 162-residue chain is Ribosome maturation factor RimP (162 aa).

This sequence belongs to the RimP family.

Its subcellular location is the cytoplasm. In terms of biological role, required for maturation of 30S ribosomal subunits. This is Ribosome maturation factor RimP from Ralstonia nicotianae (strain ATCC BAA-1114 / GMI1000) (Ralstonia solanacearum).